The sequence spans 2327 residues: Pre-mRNA-processing-splicing factor 8 homolog (2327 aa).

The span at 1–14 shows a compositional bias: polar residues; the sequence is MDDTNSNINQSNES. The disordered stretch occupies residues 1–20; the sequence is MDDTNSNINQSNESQHLEEK. The tract at residues 801–1292 is reverse transcriptase homology domain; it reads TTVHWLEKRR…KIQTRVKIGL (492 aa). The segment at 1293–1566 is linker; that stretch reads NSKMPNRFPP…TLKISLIQIF (274 aa). An important for branch point selection region spans residues 1502 to 1515; the sequence is MKYKKLTHAQRSGL. Residues 1570-1740 are restriction endonuclease homology domain; that stretch reads LWQKIHESLV…LRERIRKGLQ (171 aa). Residues 1657-2023 are involved in interaction with pre-mRNA 5' splice site; that stretch reads GDFDSHDIER…QIAEIEKQKT (367 aa). The tract at residues 1755 to 2008 is RNase H homology domain; it reads NFGELFSNKI…ILGMEISAPS (254 aa). An MPN domain is found at 2093–2223; the sequence is TYVFPKNILK…LTAYHLTPSG (131 aa).

In terms of assembly, part of the U5 snRNP complex and of the U4/U6-U5 tri-snRNP complex.

The protein resides in the nucleus speckle. Functions as a scaffold that mediates the ordered assembly of spliceosomal proteins and snRNAs. Required for the assembly of the U4/U6-U5 tri-snRNP complex. Functions as a scaffold that positions spliceosomal U2, U5 and U6 snRNAs at splice sites on pre-mRNA substrates, so that splicing can occur. Interacts with both the 5' and the 3' splice site. The sequence is that of Pre-mRNA-processing-splicing factor 8 homolog (prpf8) from Dictyostelium discoideum (Social amoeba).